The primary structure comprises 268 residues: Embryonic abundant protein USP92 (268 aa).

The signal sequence occupies residues 1–22 (MEFAHLTVLSLFCLAFVGITAT). Tandem repeats lie at residues 50 to 55 (GKTNSL), 83 to 88 (GNTNSV), 101 to 106 (GVTDSI), 166 to 183 (YVVEDVKKVGDNAVMCHR), and 202 to 222 (YVVSLVASDGTKTKALTVCHH). The interval 50–106 (GKTNSLPIKSEELKQYSTLFFEHDLHPRKNFILGNTNSVGSIIRPFTKSRQGVTDSI) is 3 X 6 AA approximate repeats. The BURP domain maps to 68–259 (LFFEHDLHPR…GNKAAAWVPN (192 aa)). Positions 166 to 222 (YVVEDVKKVGDNAVMCHRLNFEKVVFNCHQVRETTAYVVSLVASDGTKTKALTVCHH) are 2 X approximate repeats. N259 carries N-linked (GlcNAc...) asparagine glycosylation.

Seed.

The chain is Embryonic abundant protein USP92 from Vicia faba (Broad bean).